Consider the following 949-residue polypeptide: Protein translocase subunit SecA (949 aa).

ATP is bound by residues glutamine 87, glycine 105–threonine 109, and aspartate 524. 2 disordered regions span residues proline 852–glycine 876 and leucine 896–lysine 939. Zn(2+)-binding residues include cysteine 933, cysteine 935, cysteine 944, and histidine 945.

The protein belongs to the SecA family. As to quaternary structure, monomer and homodimer. Part of the essential Sec protein translocation apparatus which comprises SecA, SecYEG and auxiliary proteins SecDF-YajC and YidC. Zn(2+) serves as cofactor.

It localises to the cell inner membrane. It is found in the cytoplasm. It carries out the reaction ATP + H2O + cellular proteinSide 1 = ADP + phosphate + cellular proteinSide 2.. Functionally, part of the Sec protein translocase complex. Interacts with the SecYEG preprotein conducting channel. Has a central role in coupling the hydrolysis of ATP to the transfer of proteins into and across the cell membrane, serving both as a receptor for the preprotein-SecB complex and as an ATP-driven molecular motor driving the stepwise translocation of polypeptide chains across the membrane. This Methylocella silvestris (strain DSM 15510 / CIP 108128 / LMG 27833 / NCIMB 13906 / BL2) protein is Protein translocase subunit SecA.